A 196-amino-acid polypeptide reads, in one-letter code: Imidazoleglycerol-phosphate dehydratase (196 aa).

This sequence belongs to the imidazoleglycerol-phosphate dehydratase family.

The protein resides in the cytoplasm. The catalysed reaction is D-erythro-1-(imidazol-4-yl)glycerol 3-phosphate = 3-(imidazol-4-yl)-2-oxopropyl phosphate + H2O. Its pathway is amino-acid biosynthesis; L-histidine biosynthesis; L-histidine from 5-phospho-alpha-D-ribose 1-diphosphate: step 6/9. This Lachnoclostridium phytofermentans (strain ATCC 700394 / DSM 18823 / ISDg) (Clostridium phytofermentans) protein is Imidazoleglycerol-phosphate dehydratase.